The sequence spans 511 residues: Coatomer subunit delta (511 aa).

The span at 167-177 (QQARRDAERQG) shows a compositional bias: basic and acidic residues. Positions 167 to 188 (QQARRDAERQGKKAPGFGGFGS) are disordered. At Ser223 the chain carries Phosphoserine. Residues Lys233 and Lys241 each carry the N6-acetyllysine modification. Position 244 is a phosphoserine (Ser244). Positions 271–511 (MESVHMKIEE…TFLVDKYEIL (241 aa)) constitute an MHD domain. 2 positions are modified to N6-acetyllysine: Lys309 and Lys351. Residue Ser493 is modified to Phosphoserine.

The protein belongs to the adaptor complexes medium subunit family. Delta-COP subfamily. In terms of assembly, oligomeric complex that consists of at least the alpha, beta, beta', gamma, delta, epsilon and zeta subunits.

The protein resides in the cytoplasm. It is found in the golgi apparatus membrane. The protein localises to the cytoplasmic vesicle. It localises to the COPI-coated vesicle membrane. The coatomer is a cytosolic protein complex that binds to dilysine motifs and reversibly associates with Golgi non-clathrin-coated vesicles, which further mediate biosynthetic protein transport from the ER, via the Golgi up to the trans Golgi network. Coatomer complex is required for budding from Golgi membranes, and is essential for the retrograde Golgi-to-ER transport of dilysine-tagged proteins. In mammals, the coatomer can only be recruited by membranes associated to ADP-ribosylation factors (ARFs), which are small GTP-binding proteins; the complex also influences the Golgi structural integrity, as well as the processing, activity, and endocytic recycling of LDL receptors. In Pongo abelii (Sumatran orangutan), this protein is Coatomer subunit delta (ARCN1).